The chain runs to 169 residues: Peptide deformylase 1 (169 aa).

Fe cation contacts are provided by C93 and H135. Residue E136 is part of the active site. H139 provides a ligand contact to Fe cation.

It belongs to the polypeptide deformylase family. Fe(2+) is required as a cofactor.

The catalysed reaction is N-terminal N-formyl-L-methionyl-[peptide] + H2O = N-terminal L-methionyl-[peptide] + formate. Functionally, removes the formyl group from the N-terminal Met of newly synthesized proteins. Requires at least a dipeptide for an efficient rate of reaction. N-terminal L-methionine is a prerequisite for activity but the enzyme has broad specificity at other positions. This Corynebacterium glutamicum (strain ATCC 13032 / DSM 20300 / JCM 1318 / BCRC 11384 / CCUG 27702 / LMG 3730 / NBRC 12168 / NCIMB 10025 / NRRL B-2784 / 534) protein is Peptide deformylase 1.